A 508-amino-acid polypeptide reads, in one-letter code: GATA zinc finger domain-containing protein 13 (508 aa).

Disordered stretches follow at residues 20–51 and 203–296; these read YSKN…INNN and MSII…PEIE. Residues 23-51 show a composition bias toward low complexity; that stretch reads NNNNNNNNNNNNNINNNNNNNNNNNINNN. Polar residues predominate over residues 203 to 224; that stretch reads MSIIPSDNFPTPQLPLETNTDL. Low complexity predominate over residues 225-247; sequence NNTSDCSSTTFSSPPSSAFNSPN. Polar residues predominate over residues 248–266; that stretch reads LQNDYTQPQNQKSQSSTIV. The span at 269–279 shows a compositional bias: basic residues; that stretch reads NSSKSKSKNNK. Residues 327-354 form a GATA-type zinc finger; it reads CSICKIKCSIYWRRILINEVRTSVCNAC. Residues 356–433 are a coiled coil; that stretch reads LRTMKKTKKE…NNNNNNNNNN (78 aa). A compositionally biased stretch (low complexity) spans 399–482; sequence TTTTTTTTTS…NNNNNDNYND (84 aa). The disordered stretch occupies residues 399–484; sequence TTTTTTTTTS…NNNDNYNDSI (86 aa).

This is GATA zinc finger domain-containing protein 13 (gtaM) from Dictyostelium discoideum (Social amoeba).